The chain runs to 242 residues: Phosphoribosylaminoimidazole-succinocarboxamide synthase (242 aa).

It belongs to the SAICAR synthetase family.

It carries out the reaction 5-amino-1-(5-phospho-D-ribosyl)imidazole-4-carboxylate + L-aspartate + ATP = (2S)-2-[5-amino-1-(5-phospho-beta-D-ribosyl)imidazole-4-carboxamido]succinate + ADP + phosphate + 2 H(+). Its pathway is purine metabolism; IMP biosynthesis via de novo pathway; 5-amino-1-(5-phospho-D-ribosyl)imidazole-4-carboxamide from 5-amino-1-(5-phospho-D-ribosyl)imidazole-4-carboxylate: step 1/2. The polypeptide is Phosphoribosylaminoimidazole-succinocarboxamide synthase (Prochlorococcus marinus subsp. pastoris (strain CCMP1986 / NIES-2087 / MED4)).